Reading from the N-terminus, the 546-residue chain is MSLQLLNPKAESLRRDAALKVNVTSAEGLQSVLETNLGPKGTLKMLVDGAGNIKLTKDGKVLLTEMQIQSPTAVLIARAAAAQDEITGDGTTTVVCLVGELLRQAHRFIQEGVHPRIITDGFEIARKESMKFLDEFKISKTNLSNDREFLLQVARSSLLTKVDADLTEVLTPIVTDAVLSVYDAQADNLDLHMVEIMQMQHLSPKDTTFIKGLVLDHGGRHPDMPTRVKNAYVLILNVSLEYEKTEVNSGFFYSSADQRDKLAASERKFVDAKLKKIIDLKNEVCGMDPDKGFVIINQKGIDPMSLDVFAKHNILALRRAKRRNMERLQLVTGGEAQNSVEDLSPQILGFSGLVYQETIGEEKFTYVTENTDPKSCTILIKGSTHYALAQTKDAVRDGLRAVANVLKDKNIIPGAGAFYIALSRYLRSANMNKLGAKGKTKTGIEAFAEALLVIPKTLVKNSGFDPLDVLAMVEDELDDAQDSDETRYVGVDLNIGDSCDPTIEGIWDSYRVLRNAITGATGIASNLLLCDELLRAGRSTLKETPQ.

Ser-2 is modified (N-acetylserine). A Phosphoserine modification is found at Ser-249.

Belongs to the TCP-1 chaperonin family. As to quaternary structure, heterooligomeric complex of about 850 to 900 kDa that forms two stacked rings, 12 to 16 nm in diameter.

The protein resides in the cytoplasm. Its function is as follows. Molecular chaperone; assists the folding of proteins upon ATP hydrolysis. Known to play a role, in vitro, in the folding of actin and tubulin. In yeast may play a role in mitotic spindle formation. The chain is T-complex protein 1 subunit zeta (CCT6) from Saccharomyces cerevisiae (strain ATCC 204508 / S288c) (Baker's yeast).